The primary structure comprises 415 residues: MSPFLYLVLLVLGLHATIHCASPEGKVTACHSSQPNATLYKMSSINADFAFNLYRRFTVETPDKNIFFSPVSISAALVMLSFGACCSTQTEIVETLGFNLTDTPMVEIQHGFQHLICSLNFPKKELELQIGNALFIGKHLKPLAKFLNDVKTLYETEVFSTDFSNISAAKQEINSHVEMQTKGKVVGLIQDLKPNTIMVLVNYIHFKAQWANPFDPSKTEDSSSFLIDKTTTVQVPMMHQMEQYYHLVDMELNCTVLQMDYSKNALALFVLPKEGQMESVEAAMSSKTLKKWNRLLQKGWVDLFVPKFSISATYDLGATLLKMGIQHAYSENADFSGLTEDNGLKLSNAAHKAVLHIGEKGTEAAAVPEVELSDQPENTFLHPIIQIDRSFMLLILERSTRSILFLGKVVDPTEA.

The signal sequence occupies residues 1–20 (MSPFLYLVLLVLGLHATIHC). 4 N-linked (GlcNAc...) asparagine glycosylation sites follow: N36, N99, N165, and N253. N293 and R398 together coordinate thyroxine.

Belongs to the serpin family.

It is found in the secreted. In terms of biological role, major thyroid hormone transport protein in serum. This Pan troglodytes (Chimpanzee) protein is Thyroxine-binding globulin (SERPINA7).